Reading from the N-terminus, the 443-residue chain is ATP-dependent protease ATPase subunit HslU (443 aa).

ATP contacts are provided by residues valine 18 and 60 to 65 (GVGKTE). The segment at 139–160 (AKNNWGQPEESGEPSSARQNFR) is disordered. ATP contacts are provided by aspartate 256, glutamate 321, and arginine 393.

Belongs to the ClpX chaperone family. HslU subfamily. In terms of assembly, a double ring-shaped homohexamer of HslV is capped on each side by a ring-shaped HslU homohexamer. The assembly of the HslU/HslV complex is dependent on binding of ATP.

It localises to the cytoplasm. Functionally, ATPase subunit of a proteasome-like degradation complex; this subunit has chaperone activity. The binding of ATP and its subsequent hydrolysis by HslU are essential for unfolding of protein substrates subsequently hydrolyzed by HslV. HslU recognizes the N-terminal part of its protein substrates and unfolds these before they are guided to HslV for hydrolysis. This Sodalis glossinidius (strain morsitans) protein is ATP-dependent protease ATPase subunit HslU.